The primary structure comprises 554 residues: DNA ligase B (554 aa).

Residue K122 is the N6-AMP-lysine intermediate of the active site.

The protein belongs to the NAD-dependent DNA ligase family. LigB subfamily.

The catalysed reaction is NAD(+) + (deoxyribonucleotide)n-3'-hydroxyl + 5'-phospho-(deoxyribonucleotide)m = (deoxyribonucleotide)n+m + AMP + beta-nicotinamide D-nucleotide.. In terms of biological role, catalyzes the formation of phosphodiester linkages between 5'-phosphoryl and 3'-hydroxyl groups in double-stranded DNA using NAD as a coenzyme and as the energy source for the reaction. This chain is DNA ligase B, found in Pseudomonas fluorescens (strain SBW25).